The chain runs to 31 residues: U13-ctenitoxin-Pn1b (31 aa).

Intrachain disulfides connect C3/C17, C10/C21, and C16/C30.

As to expression, expressed by the venom gland.

It is found in the secreted. Acts as a neurotoxin. This Phoneutria nigriventer (Brazilian armed spider) protein is U13-ctenitoxin-Pn1b.